Here is a 510-residue protein sequence, read N- to C-terminus: MSKKPVALIILDGFAMRDEAKGNAVAQANKPNFDRYWNQYPHALLKADGEAVGLPEGQMGNSEVGHLNIGAGRIVYQSLTRVNLSIREGEFFENETFLNAMNHVKEKGSSLHIYGLVSDGGIHSHINHLYALLELAKREQVERVYIHGFLDGRDVGPTSAESYLVDLEAKMKELGVGELATLHGRYYAMDRDKRWDRVEKSYRAMVYGEGPAYSSALDVIKDSYENSIHDEFVIPSVITNEDGSPVATIEDDDAIIFFNFRPDRAIQMSQVFTNKDFRGFDRGEKLPQNVYYVCLTHFSETVQGDVAFKPTNLDNTLGEVLAQQNYKQLRIAETEKYPHVTFFFSGGREEPFPGEERILIDSPKVATYDLKPEMSAYEVTDALLNEIEADKHDVIILNFANPDMVGHSGMLEPTIKAVEAVDECLGKVVDAILAKGGAAVITADHGNADEVVTLEGKPMTAHTTNKVPVIVTEEGLNLREDGILADLSPTVLDLLGGKQPAEMTGKTLIK.

A Mn(2+)-binding site is contributed by Asp-12. A Phosphotyrosine modification is found at Tyr-36. Ser-62 contributes to the Mn(2+) binding site. The active-site Phosphoserine intermediate is the Ser-62. Substrate contacts are provided by residues His-123, 153–154, Arg-185, Arg-191, 261–264, and Lys-336; these read RD and RPDR. Positions 403, 407, 444, 445, and 462 each coordinate Mn(2+).

Belongs to the BPG-independent phosphoglycerate mutase family. As to quaternary structure, monomer. Requires Mn(2+) as cofactor.

It catalyses the reaction (2R)-2-phosphoglycerate = (2R)-3-phosphoglycerate. The protein operates within carbohydrate degradation; glycolysis; pyruvate from D-glyceraldehyde 3-phosphate: step 3/5. Essential for rapid growth and for sporulation. Catalyzes the interconversion of 2-phosphoglycerate and 3-phosphoglycerate. This is 2,3-bisphosphoglycerate-independent phosphoglycerate mutase from Halalkalibacterium halodurans (strain ATCC BAA-125 / DSM 18197 / FERM 7344 / JCM 9153 / C-125) (Bacillus halodurans).